Here is a 378-residue protein sequence, read N- to C-terminus: MIHFSINKNLFLQALNTTKRAISSKNAIPILSTVKIDVTNEGITLIGSNGQISIENFISQKNEDAGLLITSLGSILLEASFFINVVSSLPDVTLDFKEIEQNQIVLTSGKSEITLKGKDSEQYPRIQEISASTPLILETKLLKKIINETAFAASTQESRPILTGVHFVLSQHKELKTVATDSHRLSQKKLTLEKNSDDFDVVIPSRSLREFSAVFTDDIETVEIFFANNQILFRSENISFYTRLLEGNYPDTDRLIPTDFNTTITFNVVNLRQSMERARLLSSATQNGTVKLEIKDGVVSAHVHSPEVGKVNEEIDTDQVTGEDLTISFNPTYLIDSLKALNSEKVTISFISAVRPFTLVPADTDEDFMQLITPVRTN.

This sequence belongs to the beta sliding clamp family. Forms a ring-shaped head-to-tail homodimer around DNA which binds and tethers DNA polymerases and other proteins to the DNA. The DNA replisome complex has a single clamp-loading complex (3 tau and 1 each of delta, delta', psi and chi subunits) which binds 3 Pol III cores (1 core on the leading strand and 2 on the lagging strand) each with a beta sliding clamp dimer. Additional proteins in the replisome are other copies of gamma, psi and chi, Ssb, DNA helicase and RNA primase.

It is found in the cytoplasm. Its function is as follows. Confers DNA tethering and processivity to DNA polymerases and other proteins. Acts as a clamp, forming a ring around DNA (a reaction catalyzed by the clamp-loading complex) which diffuses in an ATP-independent manner freely and bidirectionally along dsDNA. Initially characterized for its ability to contact the catalytic subunit of DNA polymerase III (Pol III), a complex, multichain enzyme responsible for most of the replicative synthesis in bacteria; Pol III exhibits 3'-5' exonuclease proofreading activity. The beta chain is required for initiation of replication as well as for processivity of DNA replication. This is Beta sliding clamp (dnaN) from Streptococcus pneumoniae serotype 4 (strain ATCC BAA-334 / TIGR4).